Consider the following 242-residue polypeptide: Uridylate kinase (242 aa).

Position 12–15 (12–15 (KLSG)) interacts with ATP. Residues 20-25 (GNDGFG) form an involved in allosteric activation by GTP region. UMP is bound at residue glycine 54. Glycine 55 and arginine 59 together coordinate ATP. UMP-binding positions include aspartate 74 and 135 to 142 (TGNPYFST). Residues asparagine 163, tyrosine 169, and aspartate 172 each contribute to the ATP site.

Belongs to the UMP kinase family. As to quaternary structure, homohexamer.

It is found in the cytoplasm. It carries out the reaction UMP + ATP = UDP + ADP. Its pathway is pyrimidine metabolism; CTP biosynthesis via de novo pathway; UDP from UMP (UMPK route): step 1/1. Its activity is regulated as follows. Allosterically activated by GTP. Inhibited by UTP. In terms of biological role, catalyzes the reversible phosphorylation of UMP to UDP. This Listeria innocua serovar 6a (strain ATCC BAA-680 / CLIP 11262) protein is Uridylate kinase.